Reading from the N-terminus, the 266-residue chain is Glycine--tRNA ligase beta subunit (266 aa).

It belongs to the class-II aminoacyl-tRNA synthetase family. As to quaternary structure, tetramer of two alpha and two beta subunits.

It is found in the cytoplasm. The catalysed reaction is tRNA(Gly) + glycine + ATP = glycyl-tRNA(Gly) + AMP + diphosphate. The protein is Glycine--tRNA ligase beta subunit (glyS) of Moraxella catarrhalis (Branhamella catarrhalis).